The primary structure comprises 306 residues: MENLQLVLLLIGAIAIIAVLVHGFWSIRKQQPKGYKQGSMVGINRERRDAEGFDNDGIGEVRVVKSTPAEAETSKPDVNEQAPQFIEPVEEAFELSQAPAIKVNKTRVEPSLSAEAPAFTAEAPVQESLFATDEPLLAEPVIEARQAPLDVAPQEPVVDEPKQVATEALGEPQDVLVLHVVAKEGKELSGAELLPCLLTLNFKFGDLNIFHRHEDNAGTGKVLFSMANMVKPGVFDPDNMEQFSTQGVVLFMTLPCYGDALMNFSIMLNSAHQIADDLGGVLLDGGRDEWLESTKQNYIQRIRAQA.

Residues 1–6 (MENLQL) are Periplasmic-facing. Residues 7–27 (VLLLIGAIAIIAVLVHGFWSI) traverse the membrane as a helical segment. Over 28 to 306 (RKQQPKGYKQ…NYIQRIRAQA (279 aa)) the chain is Cytoplasmic.

It belongs to the ZipA family. As to quaternary structure, interacts with FtsZ via their C-terminal domains.

Its subcellular location is the cell inner membrane. Its function is as follows. Essential cell division protein that stabilizes the FtsZ protofilaments by cross-linking them and that serves as a cytoplasmic membrane anchor for the Z ring. Also required for the recruitment to the septal ring of downstream cell division proteins. In Shewanella halifaxensis (strain HAW-EB4), this protein is Cell division protein ZipA.